A 1040-amino-acid chain; its full sequence is Probable starch synthase 4, chloroplastic/amyloplastic (1040 aa).

The N-terminal 42 residues, 1–42, are a transit peptide targeting the chloroplast; the sequence is MTTKLSSFCFLTHGLAGISCEREHGSSRRFFYLPSRRLVSTS. Residues 43 to 142 are disordered; the sequence is CKMRQQRGFD…KSKTAKKKGE (100 aa). 2 stretches are compositionally biased toward basic and acidic residues: residues 52-61 and 112-124; these read DSSKRQEVKK and NHAD…KDDI. Positions 187 to 466 form a coiled coil; that stretch reads ELMTMIRSAE…EESKKKSRDE (280 aa). The ADP site is built by lysine 556, glycine 559, and aspartate 562. The (1,4-alpha-D-glucosyl)n site is built by tryptophan 679 and glutamine 680. 7 residues coordinate ADP: arginine 849, lysine 854, lysine 906, aspartate 908, tyrosine 916, leucine 933, and threonine 934.

The protein belongs to the glycosyltransferase 1 family. Bacterial/plant glycogen synthase subfamily. In terms of assembly, interacts with PTST2. Interacts with PII1; the interaction is essential for the initiation of starch granules biosynthesis in leaf chloroplasts. Expressed in leaves and flowers.

It localises to the plastid. The protein localises to the chloroplast. It is found in the amyloplast. The protein resides in the chloroplast stroma. The catalysed reaction is [(1-&gt;4)-alpha-D-glucosyl](n) + ADP-alpha-D-glucose = [(1-&gt;4)-alpha-D-glucosyl](n+1) + ADP + H(+). It functions in the pathway glycan biosynthesis; starch biosynthesis. Functionally, probably involved in the priming of starch granule formation. May play a regulatory role in the control of starch accumulation in plastids. Is necessary and sufficient to establish the correct number of starch granules observed in chloroplasts. The protein is Probable starch synthase 4, chloroplastic/amyloplastic of Arabidopsis thaliana (Mouse-ear cress).